We begin with the raw amino-acid sequence, 112 residues long: uncharacterized protein (112 aa).

This is an uncharacterized protein from Acanthamoeba polyphaga mimivirus (APMV).